A 174-amino-acid chain; its full sequence is DNA-directed RNA polymerase IV subunit 7 (174 aa).

The protein belongs to the eukaryotic RPB7/RPC8 RNA polymerase subunit family. Component of the RNA polymerase IV complex. Interacts with NRPD1.

Its subcellular location is the nucleus. DNA-dependent RNA polymerase catalyzes the transcription of DNA into RNA using the four ribonucleoside triphosphates as substrates. Component of RNA polymerase IV which mediates 24-nt short-interfering RNAs (siRNA) accumulation. Implicated in siRNA-directed heterochromatin formation through the action of DCL3 and AGO4, and subsequent DNA methylation-dependent silencing of targeted sequences. Essential component of a self-reinforcing loop coupling de novo DNA methylation to siRNA production. Required for intercellular but not intracellular RNA interference (RNAi) leading to systemic post-transcriptional gene silencing. Involved in the maintenance of post-transcriptional RNA silencing. The sequence is that of DNA-directed RNA polymerase IV subunit 7 (NRPD7) from Arabidopsis thaliana (Mouse-ear cress).